We begin with the raw amino-acid sequence, 871 residues long: Protein arg-6, mitochondrial (871 aa).

The N-terminal 44 residues, 1–44, are a transit peptide targeting the mitochondrion; that stretch reads MYSACAVALRAGARRVVRRVPKSARALPRAAAARRQISTTAARS. The region spanning 336–488 is the N-acetyltransferase domain; the sequence is QASTSLSEFK…DFTENGRAML (153 aa). Cys-689 is an active-site residue.

It in the N-terminal section; belongs to the acetylglutamate kinase family. In the C-terminal section; belongs to the NAGSA dehydrogenase family. The protein precursor is cleaved into the two biologically active enzymes, the kinase and the reductase.

It is found in the mitochondrion. The enzyme catalyses N-acetyl-L-glutamate 5-semialdehyde + phosphate + NADP(+) = N-acetyl-L-glutamyl 5-phosphate + NADPH + H(+). It catalyses the reaction N-acetyl-L-glutamate + ATP = N-acetyl-L-glutamyl 5-phosphate + ADP. It functions in the pathway amino-acid biosynthesis; L-arginine biosynthesis; N(2)-acetyl-L-ornithine from L-glutamate: step 2/4. It participates in amino-acid biosynthesis; L-arginine biosynthesis; N(2)-acetyl-L-ornithine from L-glutamate: step 3/4. This chain is Protein arg-6, mitochondrial (arg-6), found in Neurospora crassa (strain ATCC 24698 / 74-OR23-1A / CBS 708.71 / DSM 1257 / FGSC 987).